A 300-amino-acid polypeptide reads, in one-letter code: MSPSMLTGNSPRGCRLPSISSTTCGRQLEKVPEKRDSGMTEVERTYSANCSDFLESKGCFANTTPSGKSVSSSSSVETGPSVSEPPGLPRVSAYVDTTADLDRKLSFSHSDHSSEMSLPEVQKDKYPEEFSLLKLQTKDGHRPEWTFYPRFSSNIHTYHVGKQCFFNGVFLGNKRSLSERTVDKCFGRKKYDIDPRNGIPKLTPGDNPYMYPEQSKGFHKAGSMLPPVNFSIVPYEKKFDTFIPLEPLPQIPNLPFWVKEKANSLKNEIQEVEELDNWQPAVPLMHMLHLSGALDFPRQS.

Polar residues predominate over residues 1 to 10; sequence MSPSMLTGNS. Disordered stretches follow at residues 1–42 and 64–91; these read MSPS…MTEV and TPSG…LPRV. The segment covering 27–42 has biased composition (basic and acidic residues); it reads QLEKVPEKRDSGMTEV. The span at 64–85 shows a compositional bias: low complexity; the sequence is TPSGKSVSSSSSVETGPSVSEP. Position 113 is a phosphoserine (Ser-113).

The protein is Spermatogenesis-associated serine-rich protein 1 (SPATS1) of Homo sapiens (Human).